The following is a 156-amino-acid chain: Ribosomal RNA large subunit methyltransferase H (156 aa).

S-adenosyl-L-methionine-binding positions include Leu73, Gly104, and 123–128 (LSALTL).

Belongs to the RNA methyltransferase RlmH family. Homodimer.

The protein localises to the cytoplasm. The catalysed reaction is pseudouridine(1915) in 23S rRNA + S-adenosyl-L-methionine = N(3)-methylpseudouridine(1915) in 23S rRNA + S-adenosyl-L-homocysteine + H(+). Specifically methylates the pseudouridine at position 1915 (m3Psi1915) in 23S rRNA. The sequence is that of Ribosomal RNA large subunit methyltransferase H from Colwellia psychrerythraea (strain 34H / ATCC BAA-681) (Vibrio psychroerythus).